The chain runs to 311 residues: Urease accessory protein UreD 3 (311 aa).

It belongs to the UreD family. As to quaternary structure, ureD, UreF and UreG form a complex that acts as a GTP-hydrolysis-dependent molecular chaperone, activating the urease apoprotein by helping to assemble the nickel containing metallocenter of UreC. The UreE protein probably delivers the nickel.

It is found in the cytoplasm. Its function is as follows. Required for maturation of urease via the functional incorporation of the urease nickel metallocenter. The chain is Urease accessory protein UreD 3 from Methylorubrum populi (strain ATCC BAA-705 / NCIMB 13946 / BJ001) (Methylobacterium populi).